The primary structure comprises 280 residues: Diaminopimelate epimerase (280 aa).

Substrate-binding residues include Asn13 and Asn66. Residue Cys75 is the Proton donor of the active site. Substrate is bound by residues 76–77 (GN), Asn165, Asn198, and 216–217 (ER). Cys225 serves as the catalytic Proton acceptor. 226–227 (GT) contributes to the substrate binding site.

Belongs to the diaminopimelate epimerase family. In terms of assembly, homodimer.

The protein resides in the cytoplasm. It catalyses the reaction (2S,6S)-2,6-diaminopimelate = meso-2,6-diaminopimelate. It functions in the pathway amino-acid biosynthesis; L-lysine biosynthesis via DAP pathway; DL-2,6-diaminopimelate from LL-2,6-diaminopimelate: step 1/1. Its function is as follows. Catalyzes the stereoinversion of LL-2,6-diaminopimelate (L,L-DAP) to meso-diaminopimelate (meso-DAP), a precursor of L-lysine and an essential component of the bacterial peptidoglycan. This Cyanothece sp. (strain PCC 7425 / ATCC 29141) protein is Diaminopimelate epimerase.